A 325-amino-acid chain; its full sequence is Large ribosomal subunit protein uL1m (325 aa).

The N-terminal 50 residues, 1 to 50 (MAATVRCFGRVLIHHQRCSLATVTSQTSLYPCCIYVPVPNRHFAAAAKPA), are a transit peptide targeting the mitochondrion. The segment at 47–66 (AKPAKKTKKGTKEKASNEKK) is disordered. The span at 56–66 (GTKEKASNEKK) shows a compositional bias: basic and acidic residues.

The protein belongs to the universal ribosomal protein uL1 family.

It is found in the mitochondrion. The protein is Large ribosomal subunit protein uL1m (MRPL1) of Bos taurus (Bovine).